Consider the following 345-residue polypeptide: Phosphate acyltransferase (345 aa).

The protein belongs to the PlsX family. As to quaternary structure, homodimer. Probably interacts with PlsY.

Its subcellular location is the cytoplasm. It carries out the reaction a fatty acyl-[ACP] + phosphate = an acyl phosphate + holo-[ACP]. Its pathway is lipid metabolism; phospholipid metabolism. Catalyzes the reversible formation of acyl-phosphate (acyl-PO(4)) from acyl-[acyl-carrier-protein] (acyl-ACP). This enzyme utilizes acyl-ACP as fatty acyl donor, but not acyl-CoA. The sequence is that of Phosphate acyltransferase from Thermodesulfovibrio yellowstonii (strain ATCC 51303 / DSM 11347 / YP87).